The sequence spans 256 residues: Thiazole synthase (256 aa).

Catalysis depends on Lys96, which acts as the Schiff-base intermediate with DXP. 1-deoxy-D-xylulose 5-phosphate-binding positions include Gly157, Ala184–Gly185, and Asn206–Thr207.

Belongs to the ThiG family. Homotetramer. Forms heterodimers with either ThiH or ThiS.

Its subcellular location is the cytoplasm. It carries out the reaction [ThiS sulfur-carrier protein]-C-terminal-Gly-aminoethanethioate + 2-iminoacetate + 1-deoxy-D-xylulose 5-phosphate = [ThiS sulfur-carrier protein]-C-terminal Gly-Gly + 2-[(2R,5Z)-2-carboxy-4-methylthiazol-5(2H)-ylidene]ethyl phosphate + 2 H2O + H(+). Its pathway is cofactor biosynthesis; thiamine diphosphate biosynthesis. Catalyzes the rearrangement of 1-deoxy-D-xylulose 5-phosphate (DXP) to produce the thiazole phosphate moiety of thiamine. Sulfur is provided by the thiocarboxylate moiety of the carrier protein ThiS. In vitro, sulfur can be provided by H(2)S. In Bartonella tribocorum (strain CIP 105476 / IBS 506), this protein is Thiazole synthase.